The following is a 687-amino-acid chain: Pentatricopeptide repeat-containing protein At3g09060 (687 aa).

PPR repeat units lie at residues 42-76, 77-107, 113-147, 148-182, 183-217, 218-253, 254-288, 289-323, 324-358, 359-392, 393-427, 428-462, 463-497, 498-532, 533-567, 568-602, 603-637, and 638-672; these read SAVV…ECKC, DEDV…MREI, AIRS…GVAP, NLQT…GFKP, DVFS…GVAP, DVTC…SVYP, NVKT…EREK, DLYT…KASI, DVVT…NSVN, IVSY…GYAA, DKTT…GGHL, DVYA…GVEL, NSHV…GCRP, TVVS…GWKP, DLKT…GLET, DVMM…NCTA, NLVT…GLQP, and DIIS…GIFP.

This sequence belongs to the PPR family. P subfamily.

In Arabidopsis thaliana (Mouse-ear cress), this protein is Pentatricopeptide repeat-containing protein At3g09060.